The sequence spans 313 residues: Formimidoylglutamase (313 aa).

Mn(2+)-binding residues include histidine 130, aspartate 155, histidine 157, aspartate 159, aspartate 241, and aspartate 243.

This sequence belongs to the arginase family. Mn(2+) is required as a cofactor.

It carries out the reaction N-formimidoyl-L-glutamate + H2O = formamide + L-glutamate. It participates in amino-acid degradation; L-histidine degradation into L-glutamate; L-glutamate from N-formimidoyl-L-glutamate (hydrolase route): step 1/1. In terms of biological role, catalyzes the conversion of N-formimidoyl-L-glutamate to L-glutamate and formamide. This Salmonella paratyphi A (strain ATCC 9150 / SARB42) protein is Formimidoylglutamase.